A 119-amino-acid polypeptide reads, in one-letter code: Protein TusC (119 aa).

This sequence belongs to the DsrF/TusC family. In terms of assembly, heterohexamer, formed by a dimer of trimers. The hexameric TusBCD complex contains 2 copies each of TusB, TusC and TusD. The TusBCD complex interacts with TusE.

The protein localises to the cytoplasm. Its function is as follows. Part of a sulfur-relay system required for 2-thiolation of 5-methylaminomethyl-2-thiouridine (mnm(5)s(2)U) at tRNA wobble positions. This chain is Protein TusC, found in Escherichia fergusonii (strain ATCC 35469 / DSM 13698 / CCUG 18766 / IAM 14443 / JCM 21226 / LMG 7866 / NBRC 102419 / NCTC 12128 / CDC 0568-73).